Reading from the N-terminus, the 35-residue chain is Turripeptide gsp9a (35 aa).

Residues proline 3 and proline 4 each carry the 4-hydroxyproline modification. Cystine bridges form between cysteine 7/cysteine 22, cysteine 12/cysteine 26, and cysteine 18/cysteine 33. Glutamate 14 and glutamate 17 each carry 4-carboxyglutamate.

Expressed by the venom duct.

The protein resides in the secreted. This Gemmula speciosa (Splendid gem-turris) protein is Turripeptide gsp9a.